The sequence spans 430 residues: Adenylosuccinate synthetase (430 aa).

Residues 12 to 18 (GDEGKGK) and 40 to 42 (GHT) contribute to the GTP site. Aspartate 13 (proton acceptor) is an active-site residue. Mg(2+)-binding residues include aspartate 13 and glycine 40. Residues 13 to 16 (DEGK), 38 to 41 (NAGH), threonine 128, arginine 142, glutamine 223, threonine 238, and arginine 302 each bind IMP. Histidine 41 acts as the Proton donor in catalysis. Position 298 to 304 (298 to 304 (TTTGRPR)) interacts with substrate. GTP is bound by residues arginine 304, 330–332 (SID), and 412–414 (SVG).

It belongs to the adenylosuccinate synthetase family. In terms of assembly, homodimer. The cofactor is Mg(2+).

The protein resides in the cytoplasm. It carries out the reaction IMP + L-aspartate + GTP = N(6)-(1,2-dicarboxyethyl)-AMP + GDP + phosphate + 2 H(+). The protein operates within purine metabolism; AMP biosynthesis via de novo pathway; AMP from IMP: step 1/2. Functionally, plays an important role in the de novo pathway of purine nucleotide biosynthesis. Catalyzes the first committed step in the biosynthesis of AMP from IMP. The sequence is that of Adenylosuccinate synthetase from Streptococcus pyogenes serotype M1.